Reading from the N-terminus, the 754-residue chain is Neprilysin-1 (754 aa).

A helical; Signal-anchor for type II membrane protein transmembrane segment spans residues 5–27 (FGPPIVFLISCYALILCGTVDAL). 7 N-linked (GlcNAc...) asparagine glycosylation sites follow: Asn-38, Asn-81, Asn-132, Asn-217, Asn-273, Asn-303, and Asn-441. The 692-residue stretch at 63 to 754 (VGDSEGYQEA…MNPTKRCVVW (692 aa)) folds into the Peptidase M13 domain. Cystine bridges form between Cys-87-Cys-739, Cys-95-Cys-699, Cys-151-Cys-414, and Cys-624-Cys-751. His-587 serves as a coordination point for Zn(2+). Residue Glu-588 is part of the active site. Position 591 (His-591) interacts with Zn(2+). The N-linked (GlcNAc...) asparagine glycan is linked to Asn-612. Glu-649 is a Zn(2+) binding site. The Proton donor role is filled by Asp-653.

Belongs to the peptidase M13 family. Zn(2+) serves as cofactor. As to expression, specifically expressed in pharyngeal cells and a single head neuron.

The protein resides in the membrane. In terms of biological role, probable cell surface protease. Required to control the neuronal innervation of pharyngeal pumping. The protein is Neprilysin-1 (nep-1) of Caenorhabditis elegans.